Here is a 404-residue protein sequence, read N- to C-terminus: Caspase b (404 aa).

Positions 1–171 (MEDITQLLSD…DIYTPRSGTQ (171 aa)) are excised as a propeptide. Residues 8-80 (LSDVLEDLVE…LRKIKQNERA (73 aa)) enclose the Pyrin domain. Active-site residues include His-249 and Cys-296. A propeptide spanning residues 301 to 316 (SSGVLAQDSVFASDSW) is cleaved from the precursor.

The protein belongs to the peptidase C14A family. Upon direct LPS-binding, forms large homooligomers, resulting in its activation. These oligomers are often referred to as 'non-canonical inflammasomes'. Heterotetramer that consists of two anti-parallel arranged heterodimers, each one formed by a 20 kDa (p20) and a 10 kDa (p10) subunit. Interacts with caspa. Interacts with pycard; the interaction only occurs in the presence of nlrp1. Component of NLRP1 inflammasomes. Inflammasomes are supramolecular complexes that assemble in the cytosol in response to pathogens and other damage-associated signals and play critical roles in innate immunity and inflammation. The NLRP1 inflammasome is composed of the signal sensor nlrp1, and the adapter pycard (asc), which recruit effector pro-inflammatory caspases caspa and/or caspb. The interaction between nlrp1 and pycard is required for the sequential recruitment of caspa and then caspb. Caspa is preferentially recruited first and this causes the cleavage of pro-il1b into the midformed il1b. This is followed by the recruitment of caspb, which is activated and cleaves the midformed il1b resulting in il1b maturation. In terms of processing, the two subunits are derived from the precursor sequence by an autocatalytic mechanism. As to expression, expressed in the spleen, kidney and liver, and highly expressed in the gills and gut.

It is found in the inflammasome. The protein resides in the cytoplasm. The catalysed reaction is Strict requirement for Asp at the P1 position. It has a preferred cleavage sequence of Tyr-Val-Ala-Asp-|- but also cleaves at Asp-Glu-Val-Asp-|-.. Activated by homooligomerization induced by direct binding to cytosolic LPS. Thiol protease which cleaves IL-1 beta (il1b), releasing the mature cytokine which is involved in a variety of inflammatory processes, and mediates apoptosis. Component of the NLRP1 inflammasome, which plays a crucial role in innate immunity and inflammation. In response to pathogens and other damage-associated signals, recruited to the NLRP1 inflammasome in its precursor form following the recruitment of caspase caspa. Its subsequent activation causes the cleavage of the midformed pro-il1b and results in il1b maturation and secretion in the extracellular milieu. Activated by direct binding to bacterial lipopolysaccharides (LPS), which causes non-canonical inflammasome activation and results in the pyroptosis of infected cells and their extrusion into the gut lumen, as well as in cytokine secretion. Plays a crucial role in the restriction of bacterial infection to intestinal sites. Pyroptosis limits bacterial replication, while cytokine secretion promotes the recruitment and activation of immune cells and triggers mucosal inflammation. Promotes pyroptosis by bacterial infection by E.piscicida. The protein is Caspase b of Danio rerio (Zebrafish).